The following is a 122-amino-acid chain: Large ribosomal subunit protein uL18 (122 aa).

The segment covering 1–19 has biased composition (basic residues); sequence MSTLSRKQKTQKRHKRLRR. Residues 1–26 form a disordered region; sequence MSTLSRKQKTQKRHKRLRRNLSGTDQ.

This sequence belongs to the universal ribosomal protein uL18 family. As to quaternary structure, part of the 50S ribosomal subunit; part of the 5S rRNA/L5/L18/L25 subcomplex. Contacts the 5S and 23S rRNAs.

This is one of the proteins that bind and probably mediate the attachment of the 5S RNA into the large ribosomal subunit, where it forms part of the central protuberance. The sequence is that of Large ribosomal subunit protein uL18 from Prochlorococcus marinus (strain SARG / CCMP1375 / SS120).